The sequence spans 520 residues: GMP synthase [glutamine-hydrolyzing] (520 aa).

A Glutamine amidotransferase type-1 domain is found at 9 to 202; it reads HVLIVDFGSQ…THKIAGLKGD (194 aa). Residue C86 is the Nucleophile of the active site. Catalysis depends on residues H176 and E178. Residues 203-395 form the GMPS ATP-PPase domain; it reads WTMKAFREEA…LGLPPQFVGR (193 aa). 230 to 236 serves as a coordination point for ATP; sequence SGGVDSS.

In terms of assembly, homodimer.

The enzyme catalyses XMP + L-glutamine + ATP + H2O = GMP + L-glutamate + AMP + diphosphate + 2 H(+). The protein operates within purine metabolism; GMP biosynthesis; GMP from XMP (L-Gln route): step 1/1. Catalyzes the synthesis of GMP from XMP. The chain is GMP synthase [glutamine-hydrolyzing] from Phenylobacterium zucineum (strain HLK1).